The chain runs to 146 residues: Ubiquitin-conjugating enzyme E2 variant 1D (146 aa).

The UBC core domain maps to 13-146 (PRNFRLLEEL…LVQPPEGTCF (134 aa)).

It belongs to the ubiquitin-conjugating enzyme family. In terms of assembly, heterodimer with UBC35 or UBC36. As to expression, expressed in roots, shoots, leaves, stems, flowers and pollen.

In terms of biological role, has no ubiquitin ligase activity on its own. The heterodimer with UBC catalyzes the synthesis of non-canonical poly-ubiquitin chains that are linked through 'Lys-63'. This type of poly-ubiquitination does not lead to protein degradation by the proteasome. Mediates transcriptional activation of target genes. May play a role in the control of progress through the cell cycle and differentiation. Involved in the error-free DNA repair pathway and contributes to the survival of cells after DNA damage. The sequence is that of Ubiquitin-conjugating enzyme E2 variant 1D (UEV1D) from Arabidopsis thaliana (Mouse-ear cress).